The chain runs to 450 residues: UDP-N-acetylmuramoylalanine--D-glutamate ligase (450 aa).

115 to 121 serves as a coordination point for ATP; it reads GTNGKTT.

The protein belongs to the MurCDEF family.

It localises to the cytoplasm. The enzyme catalyses UDP-N-acetyl-alpha-D-muramoyl-L-alanine + D-glutamate + ATP = UDP-N-acetyl-alpha-D-muramoyl-L-alanyl-D-glutamate + ADP + phosphate + H(+). Its pathway is cell wall biogenesis; peptidoglycan biosynthesis. Cell wall formation. Catalyzes the addition of glutamate to the nucleotide precursor UDP-N-acetylmuramoyl-L-alanine (UMA). This Lachnospira eligens (strain ATCC 27750 / DSM 3376 / VPI C15-48 / C15-B4) (Eubacterium eligens) protein is UDP-N-acetylmuramoylalanine--D-glutamate ligase.